Reading from the N-terminus, the 370-residue chain is 3,5-dihydroxyphenylacetyl-CoA synthase (370 aa).

The active site involves Cys-158.

This sequence belongs to the thiolase-like superfamily. Chalcone/stilbene synthases family.

It catalyses the reaction 4 malonyl-CoA + 4 H(+) = (3,5-dihydroxyphenyl)acetyl-CoA + 4 CO2 + 3 CoA + H2O. The protein operates within antibiotic biosynthesis; vancomycin biosynthesis. Involved in the biosynthesis of the nonproteinogenic amino acid monomer (S)-3,5-dihydroxyphenylglycine (Dpg) responsible of the production of vancomycin and teicoplanin antibiotics. Catalyzes the Claisen condensation of four molecules of malonyl-CoA to yield 3,5-dihydroxyphenylacetyl-CoA (DPA-CoA) and three free coenzyme A (CoA). DpgA requires the presence of the dehydratases DpgB and DpgD to facilitate the aromatization of the DPA-S-DgpA or DPA-S-CoA intermediate. The protein is 3,5-dihydroxyphenylacetyl-CoA synthase (dpgA) of Amycolatopsis orientalis (Nocardia orientalis).